Consider the following 101-residue polypeptide: Small ribosomal subunit protein uS14 (101 aa).

Belongs to the universal ribosomal protein uS14 family. As to quaternary structure, part of the 30S ribosomal subunit. Contacts proteins S3 and S10.

Its function is as follows. Binds 16S rRNA, required for the assembly of 30S particles and may also be responsible for determining the conformation of the 16S rRNA at the A site. The protein is Small ribosomal subunit protein uS14 of Polaromonas sp. (strain JS666 / ATCC BAA-500).